The following is an 87-amino-acid chain: Candoxin (87 aa).

The signal sequence occupies residues 1–21 (MKTLLLTLVVVTIVCLDLGYT). Cystine bridges form between C24-C47, C27-C32, C40-C64, C68-C80, and C81-C86.

As to expression, expressed by the venom gland.

Its subcellular location is the secreted. In terms of biological role, binds and inhibits muscular and neuronal nicotinic acetylcholine receptors (nAChR). Is a reversible antagonist of muscle nAChR (alpha-1-beta-1-delta-epsilon/CHRNA1-CHRNB1-CHRND-CHRNE) (IC(50)=10 nM) and a potent and poorly reversible antagonist of the neuronal alpha-7/CHRNA7 nAChR (IC(50)=50 nM). May exhibit differential affinities for the two binding sites on the muscle nAChR. In Bungarus candidus (Malayan krait), this protein is Candoxin.